We begin with the raw amino-acid sequence, 782 residues long: E3 UFM1-protein ligase 1 homolog (782 aa).

Positions 404–477 (NASTQELEDD…GSRGGGGVNK (74 aa)) are disordered. The segment covering 443–453 (KSTKKHQRGKA) has biased composition (basic residues).

This sequence belongs to the UFL1 family.

Functionally, E3 UFM1-protein ligase that mediates ufmylation of target proteins. This Drosophila erecta (Fruit fly) protein is E3 UFM1-protein ligase 1 homolog.